Here is a 118-residue protein sequence, read N- to C-terminus: UPF0251 protein Teth39_0655 (118 aa).

This sequence belongs to the UPF0251 family.

The sequence is that of UPF0251 protein Teth39_0655 from Thermoanaerobacter pseudethanolicus (strain ATCC 33223 / 39E) (Clostridium thermohydrosulfuricum).